The following is a 72-amino-acid chain: Omega-conotoxin-like S6.6 (72 aa).

The first 22 residues, 1–22, serve as a signal peptide directing secretion; it reads MKLTCVVIVAVLLLTACQLLTA. Positions 23–45 are excised as a propeptide; the sequence is DDSRGTQKHRALRSDTKLSMSTR. Intrachain disulfides connect cysteine 46/cysteine 61, cysteine 53/cysteine 65, and cysteine 60/cysteine 71. At cysteine 71 the chain carries Cysteine amide.

This sequence belongs to the conotoxin O1 superfamily. As to expression, expressed by the venom duct.

The protein localises to the secreted. In terms of biological role, omega-conotoxins act at presynaptic membranes, they bind and block voltage-gated calcium channels (Cav). This toxin blocks N-, P- and Q-type calcium channels. This is Omega-conotoxin-like S6.6 from Conus striatus (Striated cone).